Here is a 391-residue protein sequence, read N- to C-terminus: Tryptophan synthase beta chain 2 (391 aa).

Residue lysine 83 is modified to N6-(pyridoxal phosphate)lysine.

It belongs to the TrpB family. Tetramer of two alpha and two beta chains. Requires pyridoxal 5'-phosphate as cofactor.

The enzyme catalyses (1S,2R)-1-C-(indol-3-yl)glycerol 3-phosphate + L-serine = D-glyceraldehyde 3-phosphate + L-tryptophan + H2O. The protein operates within amino-acid biosynthesis; L-tryptophan biosynthesis; L-tryptophan from chorismate: step 5/5. Its function is as follows. The beta subunit is responsible for the synthesis of L-tryptophan from indole and L-serine. The chain is Tryptophan synthase beta chain 2 (trpB2) from Chlamydia caviae (strain ATCC VR-813 / DSM 19441 / 03DC25 / GPIC) (Chlamydophila caviae).